We begin with the raw amino-acid sequence, 358 residues long: Uroporphyrinogen decarboxylase (358 aa).

Substrate-binding positions include Arg-29 to Arg-33, Asp-79, Tyr-156, Thr-211, and His-329.

It belongs to the uroporphyrinogen decarboxylase family. In terms of assembly, homodimer.

The protein localises to the cytoplasm. It catalyses the reaction uroporphyrinogen III + 4 H(+) = coproporphyrinogen III + 4 CO2. The protein operates within porphyrin-containing compound metabolism; protoporphyrin-IX biosynthesis; coproporphyrinogen-III from 5-aminolevulinate: step 4/4. In terms of biological role, catalyzes the decarboxylation of four acetate groups of uroporphyrinogen-III to yield coproporphyrinogen-III. This is Uroporphyrinogen decarboxylase from Idiomarina loihiensis (strain ATCC BAA-735 / DSM 15497 / L2-TR).